Here is a 133-residue protein sequence, read N- to C-terminus: Brain natriuretic peptide (133 aa).

The N-terminal stretch at 1–22 is a signal peptide; that stretch reads MVVSFVSICGLLLIFNLPLSTS. Acidic residues predominate over residues 44–53; it reads SMSEETEEDQ. Disordered regions lie at residues 44 to 76 and 93 to 112; these read SMSEETEEDQMVPANSESLEPVGSMKQTANRDQ and TRKNVQNDSSRRSSSCFGRR. Residues cysteine 108 and cysteine 124 are joined by a disulfide bond.

It belongs to the natriuretic peptide family.

It localises to the secreted. Functionally, cardiac hormone which may function as a paracrine antifibrotic factor in the heart. Also plays a key role in cardiovascular homeostasis through natriuresis, diuresis, vasorelaxation, and inhibition of renin and aldosterone secretion. Has a cGMP-stimulating activity. The protein is Brain natriuretic peptide (nppb) of Takifugu rubripes (Japanese pufferfish).